Here is a 288-residue protein sequence, read N- to C-terminus: ATP synthase gamma chain (288 aa).

This sequence belongs to the ATPase gamma chain family. In terms of assembly, F-type ATPases have 2 components, CF(1) - the catalytic core - and CF(0) - the membrane proton channel. CF(1) has five subunits: alpha(3), beta(3), gamma(1), delta(1), epsilon(1). CF(0) has three main subunits: a, b and c.

It localises to the cell inner membrane. Produces ATP from ADP in the presence of a proton gradient across the membrane. The gamma chain is believed to be important in regulating ATPase activity and the flow of protons through the CF(0) complex. The chain is ATP synthase gamma chain from Rickettsia bellii (strain OSU 85-389).